A 234-amino-acid chain; its full sequence is Preprocaerulein type-4 (234 aa).

Residues 1–26 (MFKGILLCVLFAVLSANPLSQPEGFA) form the signal peptide. The propeptide occupies 27–73 (DEEERDVRGLASLLGKALKAALKIGANALGGSPQQREANDERRFADG). Position 77 is a sulfotyrosine (tyrosine 77). Phenylalanine 83 is modified (phenylalanine amide). The propeptide occupies 87–137 (DDEDDVNERDVRGFGSFLGKALKAGLKIGTHFLGGAPQQREANDERRFADG). Tyrosine 141 is subject to Sulfotyrosine. Phenylalanine 147 carries the post-translational modification Phenylalanine amide. Residues 151-152 (DG) constitute a propeptide that is removed on maturation. Tyrosine 156 carries the sulfotyrosine modification. The residue at position 162 (phenylalanine 162) is a Phenylalanine amide. A propeptide spanning residues 166–216 (DDEDDVHERDVRGFGSFLGKALKAALKIGANALGGSPQQREANDERRFADG) is cleaved from the precursor. Positions 198-234 (LGGSPQQREANDERRFADGQQDYTGWMDFGRRNGEDD) are disordered. Residue tyrosine 220 is modified to Sulfotyrosine. Phenylalanine amide is present on phenylalanine 226. The propeptide occupies 230 to 234 (NGEDD).

This sequence belongs to the gastrin/cholecystokinin family. In terms of tissue distribution, expressed by the skin glands.

The protein resides in the secreted. The pharmacological activities of caerulein are quite similar to the physiological activities of gastrin and related peptides. This chain is Preprocaerulein type-4, found in Xenopus borealis (Kenyan clawed frog).